Reading from the N-terminus, the 492-residue chain is Protein nucleotidyltransferase YdiU (492 aa).

Residues G88, G90, R91, K111, D123, G124, R174, and R181 each contribute to the ATP site. D250 serves as the catalytic Proton acceptor. Residues N251 and D260 each contribute to the Mg(2+) site. D260 provides a ligand contact to ATP.

It belongs to the SELO family. Mg(2+) is required as a cofactor. Mn(2+) serves as cofactor.

It carries out the reaction L-seryl-[protein] + ATP = 3-O-(5'-adenylyl)-L-seryl-[protein] + diphosphate. The catalysed reaction is L-threonyl-[protein] + ATP = 3-O-(5'-adenylyl)-L-threonyl-[protein] + diphosphate. It catalyses the reaction L-tyrosyl-[protein] + ATP = O-(5'-adenylyl)-L-tyrosyl-[protein] + diphosphate. The enzyme catalyses L-histidyl-[protein] + UTP = N(tele)-(5'-uridylyl)-L-histidyl-[protein] + diphosphate. It carries out the reaction L-seryl-[protein] + UTP = O-(5'-uridylyl)-L-seryl-[protein] + diphosphate. The catalysed reaction is L-tyrosyl-[protein] + UTP = O-(5'-uridylyl)-L-tyrosyl-[protein] + diphosphate. Nucleotidyltransferase involved in the post-translational modification of proteins. It can catalyze the addition of adenosine monophosphate (AMP) or uridine monophosphate (UMP) to a protein, resulting in modifications known as AMPylation and UMPylation. This is Protein nucleotidyltransferase YdiU from Rhodopseudomonas palustris (strain HaA2).